We begin with the raw amino-acid sequence, 317 residues long: MKRNHDFSSSDSELDENIEVEKESADENAGANSPLGSMSPSTTSQVQARKRRRGIIEKRRRDRINNSLSELRRLVPSAFEKQGSAKLEKAEILQMTVDHLKMLHAAGGKGYFDAHALAMDYRGLGFRECLAETARYLSIIEGLDNTDPLRIRLVSHLNSYASQREAHSGLGHLAWGSAFGTPPSHLAHHLLLQQQQQQGAPLARSTSSPPSSNSSSPSSSSPSAPSTEPRLSGTVISEAGQTGPLRVPPSTSLPPGLTPPTASKLSPPLLTSLSSLSAFPFPLSAFPLLSPSSLGPATPSSSLGKPYRPWSMEIGAF.

Residues 1 to 59 (MKRNHDFSSSDSELDENIEVEKESADENAGANSPLGSMSPSTTSQVQARKRRRGIIEKR) are disordered. Residues 30-47 (GANSPLGSMSPSTTSQVQ) are compositionally biased toward polar residues. The region spanning 48-103 (ARKRRRGIIEKRRRDRINNSLSELRRLVPSAFEKQGSAKLEKAEILQMTVDHLKML) is the bHLH domain. In terms of domain architecture, Orange spans 121–157 (YRGLGFRECLAETARYLSIIEGLDNTDPLRIRLVSHL). Low complexity-rich tracts occupy residues 193–226 (QQQQ…SAPS) and 248–264 (PPST…TASK). Positions 193 to 264 (QQQQQQGAPL…PGLTPPTASK (72 aa)) are disordered. Residues 307-310 (YRPW) carry the YRPW motif motif.

Belongs to the HEY family.

The protein localises to the nucleus. Its function is as follows. Transcriptional repressor which functions as a downstream effector of Notch signaling. This is Hairy/enhancer-of-split related with YRPW motif protein 1 (hey1) from Danio rerio (Zebrafish).